A 54-amino-acid chain; its full sequence is uncharacterized protein (54 aa).

Positions 1 to 21 (MNSKQILSLSAFAMTIATAAA) are cleaved as a signal peptide. Residues 22–29 (GNWNAGDT) lie on the Extracellular side of the membrane. A helical transmembrane segment spans residues 30–50 (IALLIGIAMFFVLLLALLGWI). The Cytoplasmic portion of the chain corresponds to 51–54 (SRKK).

The protein resides in the membrane. This is an uncharacterized protein from Dictyostelium discoideum (Social amoeba).